The primary structure comprises 198 residues: Peroxiredoxin-2 (198 aa).

Position 2 is an N-acetylalanine (alanine 2). A Thioredoxin domain is found at 6 to 164 (AHIGKPAPDF…ALRLVQAFQY (159 aa)). The active-site Cysteine sulfenic acid (-SOH) intermediate is cysteine 51. A Phosphoserine modification is found at serine 112. Residue threonine 182 is modified to Phosphothreonine. The residue at position 196 (lysine 196) is an N6-acetyllysine.

Belongs to the peroxiredoxin family. AhpC/Prx1 subfamily. Homodimer; disulfide-linked, upon oxidation. 5 homodimers assemble to form a ring-like decamer. Interacts with TIPIN. In terms of processing, the enzyme can be inactivated by further oxidation of the cysteine sulfenic acid (C(P)-SOH) to sulphinic acid (C(P)-SO2H) instead of its condensation to a disulfide bond. It can be reactivated by forming a transient disulfide bond with sulfiredoxin SRXN1, which reduces the cysteine sulfinic acid in an ATP- and Mg-dependent manner. Post-translationally, acetylation increases resistance to transition to high molecular-mass complexes. Deacetylated by HDAC6 which decreases reducing activity.

The protein resides in the cytoplasm. The enzyme catalyses a hydroperoxide + [thioredoxin]-dithiol = an alcohol + [thioredoxin]-disulfide + H2O. Thiol-specific peroxidase that catalyzes the reduction of hydrogen peroxide and organic hydroperoxides to water and alcohols, respectively. Plays a role in cell protection against oxidative stress by detoxifying peroxides and as sensor of hydrogen peroxide-mediated signaling events. Might participate in the signaling cascades of growth factors and tumor necrosis factor-alpha by regulating the intracellular concentrations of H(2)O(2). The polypeptide is Peroxiredoxin-2 (PRDX2) (Cricetulus griseus (Chinese hamster)).